We begin with the raw amino-acid sequence, 355 residues long: UDP-3-O-acylglucosamine N-acyltransferase (355 aa).

Residue His-258 is the Proton acceptor of the active site.

The protein belongs to the transferase hexapeptide repeat family. LpxD subfamily. Homotrimer.

It carries out the reaction a UDP-3-O-[(3R)-3-hydroxyacyl]-alpha-D-glucosamine + a (3R)-hydroxyacyl-[ACP] = a UDP-2-N,3-O-bis[(3R)-3-hydroxyacyl]-alpha-D-glucosamine + holo-[ACP] + H(+). It functions in the pathway bacterial outer membrane biogenesis; LPS lipid A biosynthesis. In terms of biological role, catalyzes the N-acylation of UDP-3-O-acylglucosamine using 3-hydroxyacyl-ACP as the acyl donor. Is involved in the biosynthesis of lipid A, a phosphorylated glycolipid that anchors the lipopolysaccharide to the outer membrane of the cell. The protein is UDP-3-O-acylglucosamine N-acyltransferase of Bradyrhizobium diazoefficiens (strain JCM 10833 / BCRC 13528 / IAM 13628 / NBRC 14792 / USDA 110).